The chain runs to 344 residues: Phenylalanine--tRNA ligase alpha subunit (344 aa).

Glu-256 contributes to the Mg(2+) binding site.

This sequence belongs to the class-II aminoacyl-tRNA synthetase family. Phe-tRNA synthetase alpha subunit type 1 subfamily. As to quaternary structure, tetramer of two alpha and two beta subunits. The cofactor is Mg(2+).

The protein localises to the cytoplasm. The catalysed reaction is tRNA(Phe) + L-phenylalanine + ATP = L-phenylalanyl-tRNA(Phe) + AMP + diphosphate + H(+). In Bacillus mycoides (strain KBAB4) (Bacillus weihenstephanensis), this protein is Phenylalanine--tRNA ligase alpha subunit.